The following is a 515-amino-acid chain: Leucine-rich repeat transmembrane neuronal protein 2 (515 aa).

The first 33 residues, 1–33 (MGLHFKWPLGAPMLAAIYAMSVVLKMLPALGMA), serve as a signal peptide directing secretion. The LRRNT domain occupies 34–61 (CPPKCRCEKLLFYCDSQGFHSVPNATDK). At 34-421 (CPPKCRCEKL…EPDNAIFTQR (388 aa)) the chain is on the extracellular side. An N-linked (GlcNAc...) asparagine glycan is attached at N57. 10 LRR repeats span residues 63–83 (SLGL…QFAS), 86–107 (QLTW…AFQG), 110–131 (KLKE…TFTQ), 134–155 (NLQN…LFYG), 158–179 (KLQT…LFWD), 182–203 (SLEF…GFAG), 206–227 (KLRE…HFLR), 230–251 (SLHT…MDWT), 254–275 (TLEK…VFET), and 278–299 (NLKI…ILNS). N126 is a glycosylation site (N-linked (GlcNAc...) asparagine). N243 carries an N-linked (GlcNAc...) asparagine glycan. Residues 311–362 (NLWECSPRVCALASWLGSFQGRWEHSILCHSPDHTQGEDILDAVHGFQLCWN) enclose the LRRCT domain. N362 carries an N-linked (GlcNAc...) asparagine glycan. A helical transmembrane segment spans residues 422 to 442 (VITGTMALLFSFFFIIFIVFI). Over 443-515 (SRKCCPPTLR…QQLPYKECEV (73 aa)) the chain is Cytoplasmic. The Involved in DLG4-binding signature appears at 512–515 (ECEV).

The protein belongs to the LRRTM family. In terms of assembly, interacts with DLG4. Interacts with neurexin NRXN1; interaction is mediated by heparan sulfate glycan modification on neurexin. In terms of tissue distribution, expressed in neuronal tissues.

The protein resides in the cell membrane. It localises to the postsynaptic cell membrane. Functionally, involved in the development and maintenance of excitatory synapses in the vertebrate nervous system. Regulates surface expression of AMPA receptors and instructs the development of functional glutamate release sites. Acts as a ligand for the presynaptic receptors NRXN1-A and NRXN1-B. This is Leucine-rich repeat transmembrane neuronal protein 2 (Lrrtm2) from Mus musculus (Mouse).